The primary structure comprises 804 residues: MLLSKKVIANFIPTITKIEDKKIVEALNAIGAEVESIKTFSMIDYLIIGKIFTIKKHPHAEKLNICSIQISDNKFINIISDSPNLFDQTKVLNKYVIVAMEGAELPNGITVINRDIRGMNSSGLLCSYADLNPQSSEYLSEYDSKNIIILDKANLGDTEVYKYLNIDDTIFDISIPSSRPDWHGIRFLAKELAAYLNLKYVELIGRAKQTDFHQINFKVLDETDNKAKYFGGIHLRNYQLQQSSWNTKGILINNHIKPINDLVDLSNLIPLFVANPIHIHDADKIVGDVRLVQATKKEQFLALDNKWYTVQENDLLVVDDEKIIALAGIIGSMATAVDENSINYFIEVGNFDRHQIIKSAAFHKINTYSANLFSKEISLYQTKKTFEYLYQYLLTKVYNQQLSELSKTFSVDEYHQQVKVNYDKIRSLLGSMNYLPDAMIQKSLTDLGFLVEDDLVYVPSYRNDIYNWQDLVEELLKILNINLFQPIPIKADYLLEVNNETNELLDRLSKKLRSLKFNHIRTYNLTSKKRAELLNLFKYQDPVVVSKPISETRQYYRQNILTNLLEVYQLNRSYKNKLYPIFEIQSLLTKNGANHHIGLVMANNLFNHSYDPSSGIKLDLITIKGISDIIVQNFGFNCNYQTINDDTYLVKNDSLKLVVYDETIGYIGKIKKSILKEFDLADQDIYCLDINLERLITSINRYVRTYEAYDHYQEVTRDITFQLKNEVDFNSFINVINSFNKLSKWEIISIFDATNQIDTNKTYQPTKYTVRCYLKQGDKTYTTKEINQIFDELIDLMKTKQILI.

Residues 40 to 161 (FSMIDYLIIG…KANLGDTEVY (122 aa)) form the tRNA-binding domain. Positions 413-486 (EYHQQVKVNY…KILNINLFQP (74 aa)) constitute a B5 domain. Mg(2+) contacts are provided by Asp464, Asp470, Glu473, and Glu474. In terms of domain architecture, FDX-ACB spans 710–804 (DHYQEVTRDI…DLMKTKQILI (95 aa)).

The protein belongs to the phenylalanyl-tRNA synthetase beta subunit family. Type 1 subfamily. As to quaternary structure, tetramer of two alpha and two beta subunits. It depends on Mg(2+) as a cofactor.

It is found in the cytoplasm. The catalysed reaction is tRNA(Phe) + L-phenylalanine + ATP = L-phenylalanyl-tRNA(Phe) + AMP + diphosphate + H(+). The protein is Phenylalanine--tRNA ligase beta subunit of Mycoplasmoides gallisepticum (strain R(low / passage 15 / clone 2)) (Mycoplasma gallisepticum).